Consider the following 219-residue polypeptide: MKDGSGGFNGVERRGLMFVLSSPSGAGKTTLSRMLVDEAPGLTMSVSATTRPRRPGEVDGRDYYFVDRPKFDAMVEADEFLEWAHVFDNCYGTPRAPVEAALAAGRDVLFDIDWQGTQQLRSRASNDVVSVFILPPSVQDLEHRLHTRAQDSDEVIRGRMKKAGDEMSHFDAYDYIVVNDNIGVAFESVKAILRAEQLKRERQIGIEAFVRDMRRQLEK.

Positions glycine 15–arginine 194 constitute a Guanylate kinase-like domain. Serine 22 to threonine 29 contributes to the ATP binding site.

This sequence belongs to the guanylate kinase family.

Its subcellular location is the cytoplasm. The catalysed reaction is GMP + ATP = GDP + ADP. Its function is as follows. Essential for recycling GMP and indirectly, cGMP. The polypeptide is Guanylate kinase (Rhodopseudomonas palustris (strain BisB5)).